The following is a 418-amino-acid chain: Somatostatin receptor type 3 (418 aa).

Positions Met-1–Ala-21 are disordered. The Extracellular segment spans residues Met-1–Ser-43. The span at Ser-7–Ser-20 shows a compositional bias: polar residues. 2 N-linked (GlcNAc...) asparagine glycosylation sites follow: Asn-17 and Asn-30. The chain crosses the membrane as a helical span at residues Gly-44–Val-69. Residues Leu-70–Thr-79 are Cytoplasmic-facing. A helical membrane pass occupies residues Asn-80–Ala-101. At Ala-102–Cys-116 the chain is on the extracellular side. The cysteines at positions 116 and 191 are disulfide-linked. Residues Arg-117–Ser-138 form a helical membrane-spanning segment. At Val-139 to Arg-161 the chain is on the cytoplasmic side. A helical membrane pass occupies residues Thr-162–Phe-181. Topologically, residues Ser-182 to Gly-205 are extracellular. The chain crosses the membrane as a helical span at residues Phe-206–Val-231. The Cytoplasmic portion of the chain corresponds to Lys-232 to Arg-257. The helical transmembrane segment at Met-258–Val-279 threads the bilayer. Topologically, residues Asn-280–Gly-293 are extracellular. Residues Leu-294–Leu-316 form a helical membrane-spanning segment. Over Ser-317 to Leu-418 the chain is Cytoplasmic. Phosphoserine occurs at positions 332 and 337. The interval Val-335–Leu-418 is disordered. A Phosphothreonine modification is found at Thr-348. Acidic residues predominate over residues Thr-348–Glu-360. Over residues Ser-361–Asn-371 the composition is skewed to basic and acidic residues. Polar residues-rich tracts occupy residues Arg-373–Gln-385 and Lys-395–Leu-418.

The protein belongs to the G-protein coupled receptor 1 family. Homodimer and heterodimer with SSTR2. Heterodimerization with SSTR2 inactivates SSTR3 receptor function. In terms of processing, phosphorylated. Phosphorylation increases upon somatostatin binding. Brain, pituitary and pancreas.

It is found in the cell membrane. Its function is as follows. Receptor for somatostatin-14 and -28. This receptor is coupled via pertussis toxin sensitive G proteins to inhibition of adenylyl cyclase. The protein is Somatostatin receptor type 3 (SSTR3) of Homo sapiens (Human).